The chain runs to 80 residues: Putative UPF0377 protein YMR324C (80 aa).

A helical membrane pass occupies residues 13–33; the sequence is ACIFIDSVCEGIVFWGLCLFV.

The protein belongs to the UPF0377 family.

The protein resides in the membrane. This chain is Putative UPF0377 protein YMR324C, found in Saccharomyces cerevisiae (strain ATCC 204508 / S288c) (Baker's yeast).